Reading from the N-terminus, the 156-residue chain is Tripartite terminase subunit 2 (156 aa).

The interval 1 to 37 is disordered; it reads MYESENASEHHPELEDVFSENTGDSNPSMGSSDSTRS. Residues 19-37 show a composition bias toward polar residues; sequence SENTGDSNPSMGSSDSTRS.

Belongs to the herpesviridae TRM2 protein family. Associates with TRM1 and TRM3 to form the tripartite terminase complex.

It is found in the host nucleus. Component of the molecular motor that translocates viral genomic DNA in empty capsid during DNA packaging. Forms a tripartite terminase complex together with TRM1 and TRM3 in the host cytoplasm. Once the complex reaches the host nucleus, it interacts with the capsid portal vertex. This portal forms a ring in which genomic DNA is translocated into the capsid. The polypeptide is Tripartite terminase subunit 2 (Varicella-zoster virus (strain Dumas) (HHV-3)).